The primary structure comprises 425 residues: Histidine--tRNA ligase (425 aa).

Belongs to the class-II aminoacyl-tRNA synthetase family. As to quaternary structure, homodimer.

Its subcellular location is the cytoplasm. It catalyses the reaction tRNA(His) + L-histidine + ATP = L-histidyl-tRNA(His) + AMP + diphosphate + H(+). In Pelotomaculum thermopropionicum (strain DSM 13744 / JCM 10971 / SI), this protein is Histidine--tRNA ligase.